The primary structure comprises 66 residues: Photosystem II reaction center protein J (66 aa).

A helical membrane pass occupies residues 37-57 (LWLVATAGGMAVLFVVGLFFY).

This sequence belongs to the PsbJ family. PSII is composed of 1 copy each of membrane proteins PsbA, PsbB, PsbC, PsbD, PsbE, PsbF, PsbH, PsbI, PsbJ, PsbK, PsbL, PsbM, PsbT, PsbX, PsbY, PsbZ, Psb30/Ycf12, peripheral proteins PsbO, CyanoQ (PsbQ), PsbU, PsbV and a large number of cofactors. It forms dimeric complexes.

It is found in the cellular thylakoid membrane. Its function is as follows. One of the components of the core complex of photosystem II (PSII). PSII is a light-driven water:plastoquinone oxidoreductase that uses light energy to abstract electrons from H(2)O, generating O(2) and a proton gradient subsequently used for ATP formation. It consists of a core antenna complex that captures photons, and an electron transfer chain that converts photonic excitation into a charge separation. This is Photosystem II reaction center protein J from Synechococcus sp. (strain WH7803).